A 141-amino-acid chain; its full sequence is MNARGLGSELKDSIPVAELSASGPFESHDLLRKGFSCVKNELLPSHPLELSEKNFQLNQDKMNFSTLRNIQGLFAPLKLQMEFKAVQQVHRLPFLPSSNLSLDILRGNDETIGFEDILNDPSQSELMGEPHVMVEHKLGLL.

Residue Lys-39 forms a Glycyl lysine isopeptide (Lys-Gly) (interchain with G-Cter in SUMO2) linkage.

Belongs to the POMP/UMP1 family. Constituent of preproteasomes, but not of mature 20S proteasomes. Within the preproteasome, may directly interact with PSMB1/beta6, PSMB4/beta7, PSMB5/beta5, PSMB6/beta1 and PSMB9/beta1i. Interaction with PSMB8/beta5i is controversial. Forms tetramers. Widely expressed.

The protein localises to the cytoplasm. It localises to the cytosol. Its subcellular location is the nucleus. It is found in the microsome membrane. In terms of biological role, molecular chaperone essential for the assembly of standard proteasomes and immunoproteasomes. Degraded after completion of proteasome maturation. Mediates the association of 20S preproteasome with the endoplasmic reticulum. In Mus musculus (Mouse), this protein is Proteasome maturation protein (Pomp).